Reading from the N-terminus, the 77-residue chain is Metallothionein-like protein 2B (77 aa).

This sequence belongs to the metallothionein superfamily. Type 15 family. As to expression, expressed in vascular tissues of all organs. Expressed in root and leaf phloem, pollen and root hairs.

Its function is as follows. Metallothioneins have a high content of cysteine residues that bind various heavy metals. Functions as a metal chelator of copper (Cu) and zinc (Zn). Functions cooperatively with the phytochelatin synthase PCS1 to protect plants from Cu and cadmium toxicity. Plays a role in Cu homeostasis, specifically in the remobilization of Cu from senescing leaves. The mobilization of Cu from internal sources is important for seed development. This is Metallothionein-like protein 2B (MT2B) from Arabidopsis thaliana (Mouse-ear cress).